Reading from the N-terminus, the 545-residue chain is Cleavage and polyadenylation specificity factor subunit 6 (545 aa).

Positions 37-69 (ISPSANNGDAPEDRDYLDSLPAPGGNEGSKGAP) are disordered. The 81-residue stretch at 81–161 (IALYIGNLTW…QNPIVTPCNK (81 aa)) folds into the RRM domain. Residues 165 to 180 (SQFEMQSRKSTQSGQM) show a composition bias toward polar residues. Disordered regions lie at residues 165–404 (SQFE…PLSE) and 478–545 (YGSV…YRHR). Positions 184–200 (GKAGPPGSGSRGGGFPP) are enriched in gly residues. 4 stretches are compositionally biased toward pro residues: residues 220–230 (PVGPGGPPPHF), 237–265 (PRLPSGPPGPLGPPGPPPPGQGLPPPLGG), 287–363 (PMGP…PPGN), and 372–383 (GPPPGDPYGRPP). Composition is skewed to basic and acidic residues over residues 384–397 (PYDRDFPGGRDMDA) and 483–497 (GRRERSRERDHSRSR). Basic residues predominate over residues 498-508 (EKSRRHKSRSR). The span at 509-545 (DRHEDYYRERSRERDRHRERDRDRERDREREREYRHR) shows a compositional bias: basic and acidic residues.

This sequence belongs to the RRM CPSF6/7 family. Component of the cleavage factor Im (CFIm) complex.

The protein resides in the nucleus. Its subcellular location is the nucleoplasm. It localises to the nucleus speckle. It is found in the cytoplasm. Functionally, component of the cleavage factor Im (CFIm) complex that functions as an activator of the pre-mRNA 3'-end cleavage and polyadenylation processing required for the maturation of pre-mRNA into functional mRNAs. CFIm contributes to the recruitment of multiprotein complexes on specific sequences on the pre-mRNA 3'-end, so called cleavage and polyadenylation signals (pA signals). Most pre-mRNAs contain multiple pA signals, resulting in alternative cleavage and polyadenylation (APA) producing mRNAs with variable 3'-end formation. The CFIm complex acts as a key regulator of cleavage and polyadenylation site choice during APA through its binding to 5'-UGUA-3' elements localized in the 3'-untranslated region (UTR) for a huge number of pre-mRNAs. Plays a role in mRNA export. The protein is Cleavage and polyadenylation specificity factor subunit 6 of Danio rerio (Zebrafish).